A 551-amino-acid polypeptide reads, in one-letter code: ATP synthase subunit alpha, mitochondrial (551 aa).

Position 210 to 217 (Gly210 to Thr217) interacts with ATP.

This sequence belongs to the ATPase alpha/beta chains family. As to quaternary structure, F-type ATPases have 2 components, CF(1) - the catalytic core - and CF(0) - the membrane proton channel. CF(1) has five subunits: alpha(3), beta(3), gamma(1), delta(1), epsilon(1). CF(0) has three main subunits: a, b and c.

Its subcellular location is the mitochondrion. It is found in the mitochondrion inner membrane. Its function is as follows. Mitochondrial membrane ATP synthase (F(1)F(0) ATP synthase or Complex V) produces ATP from ADP in the presence of a proton gradient across the membrane which is generated by electron transport complexes of the respiratory chain. F-type ATPases consist of two structural domains, F(1) - containing the extramembraneous catalytic core, and F(0) - containing the membrane proton channel, linked together by a central stalk and a peripheral stalk. During catalysis, ATP synthesis in the catalytic domain of F(1) is coupled via a rotary mechanism of the central stalk subunits to proton translocation. Subunits alpha and beta form the catalytic core in F(1). Rotation of the central stalk against the surrounding alpha(3)beta(3) subunits leads to hydrolysis of ATP in three separate catalytic sites on the beta subunits. Subunit alpha does not bear the catalytic high-affinity ATP-binding sites. This Neurospora crassa (strain ATCC 24698 / 74-OR23-1A / CBS 708.71 / DSM 1257 / FGSC 987) protein is ATP synthase subunit alpha, mitochondrial (atp-1).